A 276-amino-acid polypeptide reads, in one-letter code: Release factor glutamine methyltransferase (276 aa).

Residues 116-120 (GTGTG), Asp139, Trp167, and Asn182 contribute to the S-adenosyl-L-methionine site. 182 to 185 (NPPY) is a binding site for substrate.

It belongs to the protein N5-glutamine methyltransferase family. PrmC subfamily.

It catalyses the reaction L-glutaminyl-[peptide chain release factor] + S-adenosyl-L-methionine = N(5)-methyl-L-glutaminyl-[peptide chain release factor] + S-adenosyl-L-homocysteine + H(+). Its function is as follows. Methylates the class 1 translation termination release factors RF1/PrfA and RF2/PrfB on the glutamine residue of the universally conserved GGQ motif. The sequence is that of Release factor glutamine methyltransferase from Pseudomonas aeruginosa (strain ATCC 15692 / DSM 22644 / CIP 104116 / JCM 14847 / LMG 12228 / 1C / PRS 101 / PAO1).